The primary structure comprises 430 residues: Cytochrome P450 monooxygenase FGSG_15680 (430 aa).

C351 contacts heme.

It belongs to the cytochrome P450 family. The cofactor is heme.

The protein operates within mycotoxin biosynthesis. Its function is as follows. Cytochrome P450 monooxygenase; part of the gene cluster that mediates the biosynthesis of gramillins A and B, bicyclic lipopeptides that induce cell death in maize leaves but not in wheat leaves. The nonribosomal peptide synthetase GRA1 incorporates respectively a glutamic adic (Glu), a leucine (Leu), a serine (Ser), a hydroxyglutamine (HOGln), a 2-amino decanoic acid, and 2 cysteins (CysB and CysA). The biosynthesis of 2-amino decanoic acid incorporated in gramillins could be initiated by a fatty acid synthase composed of the alpha and beta subunits FGSG_00036 and FGSG_11656. The cytochrome P450 monooxygenase FGSG_15680 could hydroxylate the fatty acid chain. Subsequent oxidation to the ketone by the oxidoreductase FGSG_00048 and transamination by aminotransferase FGSG_00049 could form 2-amino-decanoic acid. On the other hand, FGSG_15680 could also be responsible for the HO-modified glutamine at the gamma-position. Whether hydroxylation occurs on the fully assembled product or on the Gln residue prior to assembly into the gramillins requires further proof. The thioredoxin FGSG_00043 could also be required for the disulfide-bond formation between CysA and CysB. The specific involvement of the remaining proteins from the cluster is more difficult to discern, but could have broader regulatory (FGSG_00040 and FGSG_11657) or enzymatic functions (FGSG_00044 and FGSG_00045). The final C-domain of GRA1 does not possess the expected sequence of a termination CT domain, often implicated in macrocyclization and release of a cyclopeptidein fungal NRPs; and the thioesterase FGSG_00047 may act in concert with the terminal C-domain of GRA1 to catalyze the formation of the macrocyclic anhydride and release of the products. The chain is Cytochrome P450 monooxygenase FGSG_15680 from Gibberella zeae (strain ATCC MYA-4620 / CBS 123657 / FGSC 9075 / NRRL 31084 / PH-1) (Wheat head blight fungus).